The following is a 695-amino-acid chain: RING finger protein 145 (695 aa).

A run of 13 helical transmembrane segments spans residues 53-73 (YLAL…LTLP), 77-97 (LAKL…HQIS), 123-143 (FITA…VMKT), 146-166 (IWLF…IPIE), 168-188 (IVVI…YFLA), 225-245 (LVVP…QIYT), 275-295 (YSLL…LTLC), 316-336 (TEGV…LQVV), 340-360 (FLLS…MLEI), 384-404 (SLCL…CQFF), 410-430 (LLII…TLFV), 460-480 (LLEF…TVFG), and 482-502 (WTVM…WLRA). The segment at 537–575 (CSICYQDMNSAVITPCSHFFHPGCLKKWLYVQETCPLCH) adopts an RING-type; atypical zinc-finger fold. A compositionally biased stretch (polar residues) spans 589–604 (SGSSTNPVVEQSANNP). The tract at residues 589 to 608 (SGSSTNPVVEQSANNPPQEP) is disordered.

The protein localises to the membrane. The sequence is that of RING finger protein 145 (rnf145) from Xenopus laevis (African clawed frog).